The following is a 166-amino-acid chain: Small ribosomal subunit protein uS5 (166 aa).

One can recognise an S5 DRBM domain in the interval 11-74 (LQEKLIAVNR…EKARRNMITV (64 aa)).

It belongs to the universal ribosomal protein uS5 family. Part of the 30S ribosomal subunit. Contacts proteins S4 and S8.

With S4 and S12 plays an important role in translational accuracy. In terms of biological role, located at the back of the 30S subunit body where it stabilizes the conformation of the head with respect to the body. In Histophilus somni (strain 2336) (Haemophilus somnus), this protein is Small ribosomal subunit protein uS5.